Reading from the N-terminus, the 602-residue chain is MFS-type efflux transporter pyiT (602 aa).

The disordered stretch occupies residues 1-33; the sequence is MEKAKDSLPTTGDPVPSQGTINPVDETGGSASD. Transmembrane regions (helical) follow at residues 43–63, 123–143, 156–176, 185–205, 212–232, 251–271, and 282–302; these read FWFTFSSLVLTAFLSALEGSV, WLTIGAVVIFTVGSGICGGAT, GLGSAGINMLVELILCDLLPL, IIFMFVILGSVIGPFLGGILV, WVFYINIPFSGVCVVLLFFFL, FFGNFLLAASVGSCLFALTYG, and IIVSLVLGLLGHVAFMFFEAS. N-linked (GlcNAc...) asparagine glycosylation is present at asparagine 317. Transmembrane regions (helical) follow at residues 325–345, 357–377, 386–406, 410–430, 451–471, and 524–544; these read IATFLQTLVSFWVLYFLPLYF, GVMLLPFSVVYALSSLAGGAL, NIHFASFALMTIGMGTLTILN, SLAVIVVLEMIVALAIGVPTA, TFAFLRSVGTIWGVSIPAAIF, and LERVWQIGIVFAGVGFLVIFL. The segment covering 564-585 has biased composition (polar residues); the sequence is IPQTAADNSASRPNTINDTASQ. The segment at 564 to 602 is disordered; sequence IPQTAADNSASRPNTINDTASQAPILKQRRSTNQERETV. A glycan (N-linked (GlcNAc...) asparagine) is linked at asparagine 580.

It belongs to the major facilitator superfamily.

It is found in the cell membrane. MFS-type efflux transporter; part of the gene cluster that mediates the biosynthesis of the mycotoxin pyrichalasin H, a tyrosine-derived cytochalasan that inhibits the growth of rice seedlings, but also inhibits lymphocyte capping and actin polymerization and alters cell morphology. Pyrichalasin H is indicated as the responsible agent for the genus-specific pathogenicity of M.grisea toward crabgrass. PyiT might be involved in the excretion of pyrichalasin H. This chain is MFS-type efflux transporter pyiT, found in Pyricularia grisea (Crabgrass-specific blast fungus).